The chain runs to 212 residues: Agamous-like MADS-box protein MADS9 (212 aa).

In terms of domain architecture, MADS-box spans 1 to 61 (MGRGKIEIKR…GKMHEYCSPS (61 aa)). A K-box domain is found at 84 to 170 (HENLNNELDR…NYIVHHQGMP (87 aa)).

As to expression, expressed during flower development in stamens and petals.

It is found in the nucleus. Functionally, probable transcription factor that may play role in specifying stamen and petal organ identity. This chain is Agamous-like MADS-box protein MADS9, found in Vitis vinifera (Grape).